Reading from the N-terminus, the 363-residue chain is Small ribosomal subunit biogenesis GTPase RsgA (363 aa).

The CP-type G domain maps to 112–268; that stretch reads HQQVIAANID…LIDTPGMREL (157 aa). GTP is bound by residues 157-160 and 210-218; these read TKAD and GSSGAGKST. Positions 291, 296, 298, and 304 each coordinate Zn(2+). A disordered region spans residues 340-363; it reads RVAQNNRGKGSGKRPASIDRPGRR.

Belongs to the TRAFAC class YlqF/YawG GTPase family. RsgA subfamily. In terms of assembly, monomer. Associates with 30S ribosomal subunit, binds 16S rRNA. Requires Zn(2+) as cofactor.

The protein localises to the cytoplasm. One of several proteins that assist in the late maturation steps of the functional core of the 30S ribosomal subunit. Helps release RbfA from mature subunits. May play a role in the assembly of ribosomal proteins into the subunit. Circularly permuted GTPase that catalyzes slow GTP hydrolysis, GTPase activity is stimulated by the 30S ribosomal subunit. The chain is Small ribosomal subunit biogenesis GTPase RsgA from Xanthomonas oryzae pv. oryzae (strain MAFF 311018).